The chain runs to 229 residues: Orotidine 5'-phosphate decarboxylase (229 aa).

Residues Asp12, Lys34, Asp61–Thr70, Thr116, Arg177, Gln186, Gly206, and Arg207 contribute to the substrate site. Catalysis depends on Lys63, which acts as the Proton donor.

The protein belongs to the OMP decarboxylase family. Type 1 subfamily. In terms of assembly, homodimer.

It catalyses the reaction orotidine 5'-phosphate + H(+) = UMP + CO2. The protein operates within pyrimidine metabolism; UMP biosynthesis via de novo pathway; UMP from orotate: step 2/2. Catalyzes the decarboxylation of orotidine 5'-monophosphate (OMP) to uridine 5'-monophosphate (UMP). This is Orotidine 5'-phosphate decarboxylase from Caulobacter sp. (strain K31).